Consider the following 680-residue polypeptide: UvrABC system protein C (680 aa).

One can recognise a GIY-YIG domain in the interval 66–144 (NSPGVYRMFN…IKRLRPRFNV (79 aa)). In terms of domain architecture, UVR spans 254–289 (QKVKSHMAEAMNQAAEDLDFERAAIYRDRLAALSHV).

Belongs to the UvrC family. Interacts with UvrB in an incision complex.

The protein localises to the cytoplasm. The UvrABC repair system catalyzes the recognition and processing of DNA lesions. UvrC both incises the 5' and 3' sides of the lesion. The N-terminal half is responsible for the 3' incision and the C-terminal half is responsible for the 5' incision. The polypeptide is UvrABC system protein C (Rhizobium johnstonii (strain DSM 114642 / LMG 32736 / 3841) (Rhizobium leguminosarum bv. viciae)).